The following is a 359-amino-acid chain: Type-1 angiotensin II receptor (359 aa).

At 1–25 the chain is on the extracellular side; the sequence is MILNSSTEDGIKRIQDDCPKAGRHN. An N-linked (GlcNAc...) asparagine glycan is attached at N4. Angiotensin II-binding residues include Q15 and D17. 2 cysteine pairs are disulfide-bonded: C18–C274 and C101–C180. The chain crosses the membrane as a helical span at residues 26–55; the sequence is YIFIMIPTLYSIIFVVGLFGNSLVVIVIYF. Topologically, residues 56 to 61 are cytoplasmic; that stretch reads YMKLKT. A helical membrane pass occupies residues 62–89; that stretch reads VASVFLLNLALADLCFLLTLPLWAVYTA. At 90-98 the chain is on the extracellular side; the sequence is MEYRWPFGN. Residues 99–125 form a helical membrane-spanning segment; sequence YLCKIASGSVSFNLYASVFLLTCLSID. At 126–141 the chain is on the cytoplasmic side; it reads RYLAIVHPMKSRLRRT. A helical transmembrane segment spans residues 142–165; sequence MLVAKVTCIIIWLLAGLASLPTII. At 166 to 190 the chain is on the extracellular side; sequence HRNVFFIENTNITVCAFHYESQNST. R167 provides a ligand contact to angiotensin II. Residue N176 is glycosylated (N-linked (GlcNAc...) asparagine). Residues F182, H183, and Y184 each coordinate angiotensin II. N188 carries an N-linked (GlcNAc...) asparagine glycan. Residues 191-216 traverse the membrane as a helical segment; the sequence is LPVGLGLTKNILGFLFPFLIILTSYT. Position 199 (K199) interacts with angiotensin II. The Cytoplasmic portion of the chain corresponds to 217-239; sequence LIWKTLKKAYEIQKNKPRKDDIF. A helical transmembrane segment spans residues 240 to 268; sequence KIILAIVLFFFFSWVPHQIFTFMDVLIQL. At 269–278 the chain is on the extracellular side; that stretch reads GLIRDCKIED. The helical transmembrane segment at 279–304 threads the bilayer; it reads IVDTAMPITICLAYFNNCLNPPFYGF. Over 305–359 the chain is Cytoplasmic; it reads LGKKFKKYFLQLLKYIPPKAKSHSNLSTKMSTLSYRPSENGNSSTKKPAPCTEVE. The span at 335-350 shows a compositional bias: polar residues; that stretch reads STLSYRPSENGNSSTK. The disordered stretch occupies residues 335–359; sequence STLSYRPSENGNSSTKKPAPCTEVE. C355 carries S-palmitoyl cysteine lipidation.

The protein belongs to the G-protein coupled receptor 1 family. Interacts with MAS1. Interacts with ARRB1. Interacts with FLNA (via filamin repeat 21); increases PKA-mediated phosphorylation of FLNA. C-terminal Ser or Thr residues may be phosphorylated.

The protein localises to the cell membrane. In terms of biological role, receptor for angiotensin II, a vasoconstricting peptide, which acts as a key regulator of blood pressure and sodium retention by the kidney. The activated receptor in turn couples to G-alpha proteins G(q) (GNAQ, GNA11, GNA14 or GNA15) and thus activates phospholipase C and increases the cytosolic Ca(2+) concentrations, which in turn triggers cellular responses such as stimulation of protein kinase C. In Ovis aries (Sheep), this protein is Type-1 angiotensin II receptor (AGTR1).